The chain runs to 213 residues: Superoxide dismutase [Fe] (213 aa).

Residues H28, H82, D164, and H168 each coordinate Fe cation.

It belongs to the iron/manganese superoxide dismutase family. Homotetramer. Fe cation serves as cofactor.

The catalysed reaction is 2 superoxide + 2 H(+) = H2O2 + O2. Functionally, destroys superoxide anion radicals which are normally produced within the cells and which are toxic to biological systems. The sequence is that of Superoxide dismutase [Fe] (sodB) from Aquifex aeolicus (strain VF5).